Reading from the N-terminus, the 66-residue chain is uncharacterized protein (66 aa).

Residues 1–25 (MIVIILLFISIIVFLSVIQPQPSKN) form the signal peptide. Polar residues predominate over residues 21–31 (QPSKNKSRQQA). The tract at residues 21–66 (QPSKNKSRQQADSGYFGYSDHSSHHDGCSSDGGFSDSGCGGGGGGD) is disordered.

This is an uncharacterized protein from Bacillus subtilis (strain 168).